The sequence spans 359 residues: Membrane-bound lytic murein transglycosylase C (359 aa).

The first 16 residues, 1 to 16 (MKKYLALALIAPLLIS), serve as a signal peptide directing secretion. The N-palmitoyl cysteine moiety is linked to residue C17. C17 is lipidated: S-diacylglycerol cysteine.

Belongs to the transglycosylase Slt family.

The protein localises to the cell outer membrane. It carries out the reaction Exolytic cleavage of the (1-&gt;4)-beta-glycosidic linkage between N-acetylmuramic acid (MurNAc) and N-acetylglucosamine (GlcNAc) residues in peptidoglycan, from either the reducing or the non-reducing ends of the peptidoglycan chains, with concomitant formation of a 1,6-anhydrobond in the MurNAc residue.. Murein-degrading enzyme. May play a role in recycling of muropeptides during cell elongation and/or cell division. The chain is Membrane-bound lytic murein transglycosylase C from Escherichia coli O139:H28 (strain E24377A / ETEC).